The chain runs to 690 residues: DNA ligase (690 aa).

NAD(+)-binding positions include 43 to 47 (DAEYD), 92 to 93 (SI), and E129. The N6-AMP-lysine intermediate role is filled by K131. NAD(+)-binding residues include R152, E188, K309, and K333. Zn(2+) contacts are provided by C427, C430, C445, and C451. In terms of domain architecture, BRCT spans 610–690 (VTPTPLSGKT…GLKELLDGHS (81 aa)).

The protein belongs to the NAD-dependent DNA ligase family. LigA subfamily. Mg(2+) serves as cofactor. The cofactor is Mn(2+).

The catalysed reaction is NAD(+) + (deoxyribonucleotide)n-3'-hydroxyl + 5'-phospho-(deoxyribonucleotide)m = (deoxyribonucleotide)n+m + AMP + beta-nicotinamide D-nucleotide.. In terms of biological role, DNA ligase that catalyzes the formation of phosphodiester linkages between 5'-phosphoryl and 3'-hydroxyl groups in double-stranded DNA using NAD as a coenzyme and as the energy source for the reaction. It is essential for DNA replication and repair of damaged DNA. In Albidiferax ferrireducens (strain ATCC BAA-621 / DSM 15236 / T118) (Rhodoferax ferrireducens), this protein is DNA ligase.